The chain runs to 635 residues: Threonine--tRNA ligase (635 aa).

The 62-residue stretch at 1 to 62 (MITITLPDGS…EHDAMLRIIT (62 aa)) folds into the TGS domain. The segment at 244–535 (DHRKIGKVQD…LIEHYAGIWP (292 aa)) is catalytic. 3 residues coordinate Zn(2+): Cys-335, His-386, and His-512.

Belongs to the class-II aminoacyl-tRNA synthetase family. As to quaternary structure, homodimer. Requires Zn(2+) as cofactor.

The protein resides in the cytoplasm. It catalyses the reaction tRNA(Thr) + L-threonine + ATP = L-threonyl-tRNA(Thr) + AMP + diphosphate + H(+). Functionally, catalyzes the attachment of threonine to tRNA(Thr) in a two-step reaction: L-threonine is first activated by ATP to form Thr-AMP and then transferred to the acceptor end of tRNA(Thr). Also edits incorrectly charged L-seryl-tRNA(Thr). The chain is Threonine--tRNA ligase from Xylella fastidiosa (strain 9a5c).